Consider the following 569-residue polypeptide: MAVEQFPRKKVSRPHTEITVDTSGIGGSSSSSDKTLMLVGSAKGGKPDTVYRFRNYQQAKQVLRSGDLLDAIELAWNASDVNTASAGDILAVRVEDAKNATLTKGGLTFASTIYGVDANEIQVALEDNNLTHTKRLTVAFSKDGYKKVFDNLGKIFSIQYKGSEAQANFTIAQDSISKKATTLTLNVGSEPESTTEVMKYELGQGVYSETNVLVSAINSLPDWEAKFFPIGDKNLPTDALEAVTKVDVKTEAVFVGALAGDIAKQLEYNDYVTVAVDATKPVEDFELTNLTGGSDGTAPESWANKFPLLANEGGYYLVPLTDKQAVHSEALAFVKDRTDNGDPMRIIVGGGTNETVEESITRATNLRDPRASLVGFSGTRKMDDGRLLKLPGYMMASQIAGIASGLEVGEAITFKHFNVTSVDRVFESSQLDMLNESGVISIEFVRNRTLTAFRVVQDVTTYNDKSDPVKNEMSVGEANDFLVSELKIELDNNFIGTKVIDTSASLIKNFIQSFLDNKKRAREIQDYTPEEVQVVLEGDVASISMTVMPIRSLNKITVQLVYKQQILTA.

Residues 1 to 32 (MAVEQFPRKKVSRPHTEITVDTSGIGGSSSSS) form a disordered region.

Its subcellular location is the virion. This is Putative tail sheath protein from Enterococcus phage phiEF24C (Enterococcus bacteriophage phi-EF24C).